The primary structure comprises 417 residues: MLEQMGIAAKQASYKLAQLSSREKNRVLEKIADELEAQSEIILNANAQDVADARANGLSEAMLDRLALTPARLKGIADDVRQVCNLADPVGQVIDGGVLDSGLRLERRRVPLGVIGVIYEARPNVTVDVASLCLKTGNAVILRGGKETCRTNAATVAVIQDALKSCGLPAGAVQAIDNPDRALVSEMLRMDKYIDMLIPRGGAGLHKLCREQSTIPVITGGIGVCHIYVDESVEIAEALKVIVNAKTQRPSTCNTVETLLVNKNIADSFLPALSKQMAESGVTLHADAAALAQLQAGPAKVVAVKAEEYDDEFLSLDLNVKIVSDLDDAIAHIREHGTQHSDAILTCDMRNAQRFVNEVDSSAVYVNASTRFTDGGQFGLGAEVAVSTQKLHARGPMGLEALTTYKWIGIGDYTIRA.

The protein belongs to the gamma-glutamyl phosphate reductase family.

It localises to the cytoplasm. The catalysed reaction is L-glutamate 5-semialdehyde + phosphate + NADP(+) = L-glutamyl 5-phosphate + NADPH + H(+). It participates in amino-acid biosynthesis; L-proline biosynthesis; L-glutamate 5-semialdehyde from L-glutamate: step 2/2. Functionally, catalyzes the NADPH-dependent reduction of L-glutamate 5-phosphate into L-glutamate 5-semialdehyde and phosphate. The product spontaneously undergoes cyclization to form 1-pyrroline-5-carboxylate. This chain is Gamma-glutamyl phosphate reductase, found in Shigella boydii serotype 18 (strain CDC 3083-94 / BS512).